The sequence spans 124 residues: Ribonuclease pancreatic (124 aa).

Over residues 1–13 (KESAAAKFERQHM) the composition is skewed to basic and acidic residues. Residues 1-24 (KESAAAKFERQHMDSSTSSASSSN) form a disordered region. The substrate site is built by Lys-7 and Arg-10. The active-site Proton acceptor is His-12. 4 disulfides stabilise this stretch: Cys-26/Cys-84, Cys-40/Cys-95, Cys-58/Cys-110, and Cys-65/Cys-72. Asn-34 carries N-linked (GlcNAc...) asparagine; partial glycosylation. Substrate is bound by residues 41 to 45 (KPVNT), Lys-66, and Arg-85. His-119 acts as the Proton donor in catalysis.

The protein belongs to the pancreatic ribonuclease family. Monomer. Interacts with and forms tight 1:1 complexes with RNH1. Dimerization of two such complexes may occur. Interaction with RNH1 inhibits this protein. Pancreas.

The protein resides in the secreted. The catalysed reaction is an [RNA] containing cytidine + H2O = an [RNA]-3'-cytidine-3'-phosphate + a 5'-hydroxy-ribonucleotide-3'-[RNA].. It catalyses the reaction an [RNA] containing uridine + H2O = an [RNA]-3'-uridine-3'-phosphate + a 5'-hydroxy-ribonucleotide-3'-[RNA].. Its function is as follows. Endonuclease that catalyzes the cleavage of RNA on the 3' side of pyrimidine nucleotides. Acts on single-stranded and double-stranded RNA. The protein is Ribonuclease pancreatic (RNASE1) of Aepyceros melampus (Impala).